A 121-amino-acid polypeptide reads, in one-letter code: Large ribosomal subunit protein bL12 (121 aa).

This sequence belongs to the bacterial ribosomal protein bL12 family. Homodimer. Part of the ribosomal stalk of the 50S ribosomal subunit. Forms a multimeric L10(L12)X complex, where L10 forms an elongated spine to which 2 to 4 L12 dimers bind in a sequential fashion. Binds GTP-bound translation factors.

In terms of biological role, forms part of the ribosomal stalk which helps the ribosome interact with GTP-bound translation factors. Is thus essential for accurate translation. In Psychromonas ingrahamii (strain DSM 17664 / CCUG 51855 / 37), this protein is Large ribosomal subunit protein bL12.